Consider the following 845-residue polypeptide: Matrin-3 (845 aa).

Position 2 is an N-acetylserine (serine 2). Position 3 is an N6-acetyllysine; alternate (lysine 3). Lysine 3 is covalently cross-linked (Glycyl lysine isopeptide (Lys-Gly) (interchain with G-Cter in SUMO2); alternate). A phosphoserine mark is found at serine 4, serine 9, serine 14, serine 22, serine 41, serine 118, and serine 126. Residues lysine 132 and lysine 146 each participate in a glycyl lysine isopeptide (Lys-Gly) (interchain with G-Cter in SUMO2) cross-link. 2 disordered regions span residues arginine 147 to proline 174 and aspartate 187 to tyrosine 213. Phosphothreonine is present on threonine 150. Position 157 is a phosphoserine (serine 157). Tyrosine 158 is modified (phosphotyrosine). Residues arginine 160–proline 174 are compositionally biased toward basic and acidic residues. 3 positions are modified to phosphoserine: serine 164, serine 188, and serine 195. A compositionally biased stretch (basic and acidic residues) spans aspartate 201–tyrosine 213. A Phosphotyrosine modification is found at tyrosine 202. A phosphoserine mark is found at serine 206, serine 208, and serine 211. Tyrosine 219 carries the post-translational modification Phosphotyrosine. Phosphoserine is present on serine 234. A Glycyl lysine isopeptide (Lys-Gly) (interchain with G-Cter in SUMO2) cross-link involves residue lysine 245. Serine 264 is subject to Phosphoserine. Lysine 269 is covalently cross-linked (Glycyl lysine isopeptide (Lys-Gly) (interchain with G-Cter in SUMO2)). Residue serine 275 is modified to Phosphoserine. The disordered stretch occupies residues proline 342 to valine 394. An RRM 1 domain is found at arginine 398–lysine 473. Glycyl lysine isopeptide (Lys-Gly) (interchain with G-Cter in SUMO2) cross-links involve residues lysine 478, lysine 487, and lysine 491. Positions arginine 496–lysine 571 constitute an RRM 2 domain. 2 positions are modified to phosphoserine: serine 509 and serine 511. Lysine 515 participates in a covalent cross-link: Glycyl lysine isopeptide (Lys-Gly) (interchain with G-Cter in SUMO2). The residue at position 522 (lysine 522) is an N6-acetyllysine; alternate. Lysine 522 is covalently cross-linked (Glycyl lysine isopeptide (Lys-Gly) (interchain with G-Cter in SUMO2); alternate). The residue at position 533 (serine 533) is a Phosphoserine. Glycyl lysine isopeptide (Lys-Gly) (interchain with G-Cter in SUMO2) cross-links involve residues lysine 554 and lysine 555. The residue at position 571 (lysine 571) is an N6-acetyllysine. The interval lysine 588–asparagine 785 is disordered. A phosphoserine mark is found at serine 596, serine 598, serine 604, and serine 606. A compositionally biased stretch (basic and acidic residues) spans aspartate 600–glutamine 643. Residues lysine 617 and lysine 630 each participate in a glycyl lysine isopeptide (Lys-Gly) (interchain with G-Cter in SUMO2) cross-link. Residues glutamate 653–alanine 665 show a composition bias toward acidic residues. Serine 654, serine 671, serine 673, and serine 674 each carry phosphoserine. Threonine 679 is subject to Phosphothreonine. Phosphoserine is present on serine 689. The segment covering serine 689 to alanine 704 has biased composition (basic and acidic residues). Residues serine 708 to aspartate 716 carry the Nuclear localization signal motif. Residues lysine 717 and lysine 734 each participate in a glycyl lysine isopeptide (Lys-Gly) (interchain with G-Cter in SUMO2) cross-link. Threonine 739 carries the phosphothreonine modification. Serine 745, serine 757, and serine 760 each carry phosphoserine. A compositionally biased stretch (basic and acidic residues) spans aspartate 765 to arginine 778. Lysine 768 participates in a covalent cross-link: Glycyl lysine isopeptide (Lys-Gly) (interchain with G-Cter in SUMO2). The Matrin-type zinc finger occupies phenylalanine 799–lysine 830. Lysine 834 is subject to N6-acetyllysine; alternate. Lysine 834 is covalently cross-linked (Glycyl lysine isopeptide (Lys-Gly) (interchain with G-Cter in SUMO2); alternate).

In terms of assembly, part of a complex consisting of SFPQ, NONO and MATR3. Interacts with AGO1 and AGO2. Part of a complex composed at least of ASH2L, EMSY, HCFC1, HSPA8, CCAR2, MATR3, MKI67, RBBP5, TUBB2A, WDR5 and ZNF335; this complex may have a histone H3-specific methyltransferase activity. Interacts with TARDBP. Part of the HDP-RNP complex composed of at least HEXIM1, PRKDC, XRCC5, XRCC6, paraspeckle proteins (SFPQ, NONO, PSPC1, RBM14, and MATR3) and NEAT1 RNA. Interacts with FUS. Interacts with IGF2BP1. Interacts with IGF2BP2 and IGF2BP3. Interacts with RBPMS.

Its subcellular location is the nucleus matrix. May play a role in transcription or may interact with other nuclear matrix proteins to form the internal fibrogranular network. In association with the SFPQ-NONO heteromer may play a role in nuclear retention of defective RNAs. Plays a role in the regulation of DNA virus-mediated innate immune response by assembling into the HDP-RNP complex, a complex that serves as a platform for IRF3 phosphorylation and subsequent innate immune response activation through the cGAS-STING pathway. Binds to N6-methyladenosine (m6A)-containing mRNAs and contributes to MYC stability by binding to m6A-containing MYC mRNAs. May bind to specific miRNA hairpins. The chain is Matrin-3 (Matr3) from Rattus norvegicus (Rat).